We begin with the raw amino-acid sequence, 124 residues long: Small ribosomal subunit protein uS13 (124 aa).

The interval 95–124 (GLPVRGQRTKTNARTRKGPKRTIAGKKKAR) is disordered.

The protein belongs to the universal ribosomal protein uS13 family. As to quaternary structure, part of the 30S ribosomal subunit. Forms a loose heterodimer with protein S19. Forms two bridges to the 50S subunit in the 70S ribosome.

In terms of biological role, located at the top of the head of the 30S subunit, it contacts several helices of the 16S rRNA. In the 70S ribosome it contacts the 23S rRNA (bridge B1a) and protein L5 of the 50S subunit (bridge B1b), connecting the 2 subunits; these bridges are implicated in subunit movement. Contacts the tRNAs in the A and P-sites. The polypeptide is Small ribosomal subunit protein uS13 (Mycobacterium sp. (strain JLS)).